Consider the following 496-residue polypeptide: Probable serine/threonine-protein kinase DDB_G0284251 (496 aa).

The segment covering 1–13 has biased composition (low complexity); the sequence is MIEINNNHNNGNG. Residues 1–25 form a disordered region; that stretch reads MIEINNNHNNGNGKQFPSSQIMPDS. Residues 36-288 enclose the Protein kinase domain; that stretch reads YTLGEKIGRG…AQELLQHPIF (253 aa). ATP-binding positions include 42-50 and Lys-65; that span reads IGRGAFGQV. The Proton acceptor role is filled by Asp-158. A disordered region spans residues 323–345; the sequence is DWGSSSSTSGSSTPLSSSSSSSN. The stretch at 353 to 386 forms a coiled coil; that stretch reads EDFNKLQTTIKQQAQTISNLSEEILILKKELKEK. The disordered stretch occupies residues 454–496; sequence PQLTPSSSRENISLSNSSSSIPNPNQNQNQNNKSKSKKFGFFS. Low complexity predominate over residues 458 to 486; the sequence is PSSSRENISLSNSSSSIPNPNQNQNQNNK. Residues 487 to 496 are compositionally biased toward basic residues; that stretch reads SKSKKFGFFS.

This sequence belongs to the protein kinase superfamily. STE Ser/Thr protein kinase family. Mg(2+) serves as cofactor.

It catalyses the reaction L-seryl-[protein] + ATP = O-phospho-L-seryl-[protein] + ADP + H(+). It carries out the reaction L-threonyl-[protein] + ATP = O-phospho-L-threonyl-[protein] + ADP + H(+). In Dictyostelium discoideum (Social amoeba), this protein is Probable serine/threonine-protein kinase DDB_G0284251.